Consider the following 195-residue polypeptide: 3-isopropylmalate dehydratase small subunit (195 aa).

Belongs to the LeuD family. LeuD type 1 subfamily. In terms of assembly, heterodimer of LeuC and LeuD.

The enzyme catalyses (2R,3S)-3-isopropylmalate = (2S)-2-isopropylmalate. Its pathway is amino-acid biosynthesis; L-leucine biosynthesis; L-leucine from 3-methyl-2-oxobutanoate: step 2/4. In terms of biological role, catalyzes the isomerization between 2-isopropylmalate and 3-isopropylmalate, via the formation of 2-isopropylmaleate. The polypeptide is 3-isopropylmalate dehydratase small subunit (Frankia alni (strain DSM 45986 / CECT 9034 / ACN14a)).